Consider the following 664-residue polypeptide: Frizzled-3 (664 aa).

An N-terminal signal peptide occupies residues Met1–Ala16. Residues Gln17 to Phe204 are Extracellular-facing. The FZ domain maps to His22–Pro135. 5 disulfide bridges follow: Cys27–Cys88, Cys35–Cys81, Cys72–Cys109, Cys98–Cys132, and Cys102–Cys126. An N-linked (GlcNAc...) asparagine glycan is attached at Asn41. Residues Ile205–Ile225 form a helical membrane-spanning segment. At Asp226–Pro236 the chain is on the cytoplasmic side. A helical membrane pass occupies residues Ile237 to Leu257. Topologically, residues Glu258–Met287 are extracellular. Residues Leu288–Ile308 traverse the membrane as a helical segment. The Cytoplasmic segment spans residues Thr309–Ala327. Residues Leu328–Met348 traverse the membrane as a helical segment. Topologically, residues Asn349–Phe373 are extracellular. Asn355 carries an N-linked (GlcNAc...) asparagine glycan. Residues Val374–Ile394 form a helical membrane-spanning segment. The Cytoplasmic segment spans residues Ser395–Arg419. A helical transmembrane segment spans residues Ile420–Tyr440. Topologically, residues Glu441 to Leu476 are extracellular. Residues Ile477–Val497 traverse the membrane as a helical segment. The Cytoplasmic portion of the chain corresponds to Gly498–Ala664. The Lys-Thr-X-X-X-Trp motif, mediates interaction with the PDZ domain of Dvl family members signature appears at Lys501 to Trp506. The interval Arg537–Ala664 is disordered. Polar residues-rich tracts occupy residues Gly549–Leu564 and Lys573–His585.

This sequence belongs to the G-protein coupled receptor Fz/Smo family. In terms of tissue distribution, expression restricted to the early nervous system.

The protein localises to the membrane. Its subcellular location is the cell membrane. It is found in the cell surface. The protein resides in the apical cell membrane. Functionally, receptor for Wnt proteins. Most of frizzled receptors are coupled to the beta-catenin canonical signaling pathway, which leads to the activation of disheveled proteins, inhibition of GSK-3 kinase, nuclear accumulation of beta-catenin and activation of Wnt target genes. A second signaling pathway involving PKC and calcium fluxes has been seen for some family members, but it is not yet clear if it represents a distinct pathway or if it can be integrated in the canonical pathway, as PKC seems to be required for Wnt-mediated inactivation of GSK-3 kinase. Both pathways seem to involve interactions with G-proteins. Activated by Wnt8. Involved in transduction and intercellular transmission of polarity information during tissue morphogenesis and/or in differentiated tissues. Plays a role in controlling early axon growth and guidance processes necessary for the formation of a subset of central and peripheral major fiber tracts. Involved in the migration of cranial neural crest cells. May also be implicated in the transmission of sensory information from the trunk and limbs to the brain. Controls commissural sensory axons guidance after midline crossing along the anterior-posterior axis in the developing spinal cord in a Wnt-dependent signaling pathway. Together with FZD6, is involved in the neural tube closure and plays a role in the regulation of the establishment of planar cell polarity (PCP). Promotes neurogenesis by maintaining sympathetic neuroblasts within the cell cycle in a beta-catenin-dependent manner. This Xenopus laevis (African clawed frog) protein is Frizzled-3 (fzd3).